Reading from the N-terminus, the 310-residue chain is Tryptophan 2,3-dioxygenase (310 aa).

A disordered region spans residues 1–36 (MQPPGEDAPAGCPFSGARAAHSAPAAPAAHEASHVP). The span at 15 to 36 (SGARAAHSAPAAPAAHEASHVP) shows a compositional bias: low complexity. Substrate-binding positions include 79-83 (FIIQH), Tyr141, and Arg145. His268 provides a ligand contact to heme. Thr282 lines the substrate pocket.

The protein belongs to the tryptophan 2,3-dioxygenase family. Homotetramer. Requires heme as cofactor.

The enzyme catalyses L-tryptophan + O2 = N-formyl-L-kynurenine. It participates in amino-acid degradation; L-tryptophan degradation via kynurenine pathway; L-kynurenine from L-tryptophan: step 1/2. Its function is as follows. Heme-dependent dioxygenase that catalyzes the oxidative cleavage of the L-tryptophan (L-Trp) pyrrole ring and converts L-tryptophan to N-formyl-L-kynurenine. Catalyzes the oxidative cleavage of the indole moiety. The polypeptide is Tryptophan 2,3-dioxygenase (Burkholderia lata (strain ATCC 17760 / DSM 23089 / LMG 22485 / NCIMB 9086 / R18194 / 383)).